A 366-amino-acid chain; its full sequence is MRPAQASIDLEALRHNYRLAKRLGGSKALAVVKADAYGHGAVRCAQALEPEADGFAVACIEEALELRQAGIRAPILLLEGFFEHDELRLIAEHDLWTVAATPQQVRALAEFQSPRPLRVWLKLDSGMHRLGLSPEDFRAAWLRLRGLPQIASLVLMTHLARADELDCSRTDEQAVAFALTAGGMRAETSLRNSPGLLGWPALRNDWSRPGLMLYGANPFPQDTENTAQLRPVMTLRSRIISVRELPAGEPVGYGARFVAERPTRVGVVAMGYADGYPQFAPNGTPVLVDGQVCPLAGRVSMDMLTVDLTDHPQADIGTPVQLWGDAPQVGALAAQCNVSAYQLLCGLKRVPRVYMGEAAAKEGVTR.

Lys33 acts as the Proton acceptor; specific for D-alanine in catalysis. Residue Lys33 is modified to N6-(pyridoxal phosphate)lysine. Arg129 lines the substrate pocket. The Proton acceptor; specific for L-alanine role is filled by Tyr253. Position 301 (Met301) interacts with substrate.

The protein belongs to the alanine racemase family. Pyridoxal 5'-phosphate is required as a cofactor.

It carries out the reaction L-alanine = D-alanine. Its pathway is amino-acid biosynthesis; D-alanine biosynthesis; D-alanine from L-alanine: step 1/1. Functionally, catalyzes the interconversion of L-alanine and D-alanine. May also act on other amino acids. The chain is Alanine racemase (alr) from Xanthomonas axonopodis pv. citri (strain 306).